The chain runs to 333 residues: Flotillin-like protein FloA (333 aa).

2 helical membrane passes run 8–28 (LMPIILLALALILISVVFTFI) and 30–50 (VGLWISALAAGVNVGIFTLVG).

It belongs to the flotillin-like FloA family. As to quaternary structure, homooligomerizes.

Its subcellular location is the cell membrane. It localises to the membrane raft. Its function is as follows. Found in functional membrane microdomains (FMM) that may be equivalent to eukaryotic membrane rafts. FMMs are highly dynamic and increase in number as cells age. Flotillins are thought to be important factors in membrane fluidity. This Desulfitobacterium hafniense (strain DSM 10664 / DCB-2) protein is Flotillin-like protein FloA.